A 429-amino-acid chain; its full sequence is Argininosuccinate lyase (429 aa).

The protein belongs to the lyase 1 family. Argininosuccinate lyase subfamily.

Its subcellular location is the cytoplasm. It catalyses the reaction 2-(N(omega)-L-arginino)succinate = fumarate + L-arginine. It participates in amino-acid biosynthesis; L-arginine biosynthesis; L-arginine from L-ornithine and carbamoyl phosphate: step 3/3. The chain is Argininosuccinate lyase from Pyrobaculum aerophilum (strain ATCC 51768 / DSM 7523 / JCM 9630 / CIP 104966 / NBRC 100827 / IM2).